Consider the following 473-residue polypeptide: MKTLYSLRRFYPVETLFNGTLALAGRDQETTGFAWWAGNARLINLSGKLLGAHVAHAGLIVFWAGAMNLFEVAHFVPEKPMYEQGLILLPHLATLGWGVGPGGEVIDTFPYFVSGVLHLISSAVLGFGGIYHALLGPETLEESFPFFGYVWKDRNKMTTILGIHLILLGIGAFLLVFKALYFGGVYDTWAPGGGDVRKITNLTLSPSIIFGYLLKSPFGGEGWIVSVDDLEDIIGGHVWLGSICILGGIWHILTKPFAWARRALVWSGEAYLSYSLAAISVFGFIACCFVWFNNTAYPSEFYGPTGPEASQAQAFTFLVRDQRLGANVGSAQGPTGLGKYLMRSPTGEVIFGGETMRFWDLRAPWLEPLRGPNGLDLSRLKKDIQPWQERRSAEYMTHAPLGSLNSVGGVATEINAVNYVSPRSWLATSHFVLGFFFFVGHLWHAGRARAAAAGFEKGIDRDFEPVLSMTPLN.

The propeptide occupies 1–14 (MKTLYSLRRFYPVE). Thr-15 is modified (N-acetylthreonine). Thr-15 is modified (phosphothreonine). 5 helical membrane passes run 69–93 (LFEVAHFVPEKPMYEQGLILLPHLA), 134–155 (LLGPETLEESFPFFGYVWKDRN), 178–200 (KALYFGGVYDTWAPGGGDVRKIT), 255–275 (KPFAWARRALVWSGEAYLSYS), and 291–312 (WFNNTAYPSEFYGPTGPEASQA). Glu-367 contacts [CaMn4O5] cluster. A helical membrane pass occupies residues 447–471 (RARAAAAGFEKGIDRDFEPVLSMTP).

This sequence belongs to the PsbB/PsbC family. PsbC subfamily. PSII is composed of 1 copy each of membrane proteins PsbA, PsbB, PsbC, PsbD, PsbE, PsbF, PsbH, PsbI, PsbJ, PsbK, PsbL, PsbM, PsbT, PsbX, PsbY, PsbZ, Psb30/Ycf12, at least 3 peripheral proteins of the oxygen-evolving complex and a large number of cofactors. It forms dimeric complexes. Binds multiple chlorophylls and provides some of the ligands for the Ca-4Mn-5O cluster of the oxygen-evolving complex. It may also provide a ligand for a Cl- that is required for oxygen evolution. PSII binds additional chlorophylls, carotenoids and specific lipids. is required as a cofactor.

The protein resides in the plastid. It localises to the chloroplast thylakoid membrane. Functionally, one of the components of the core complex of photosystem II (PSII). It binds chlorophyll and helps catalyze the primary light-induced photochemical processes of PSII. PSII is a light-driven water:plastoquinone oxidoreductase, using light energy to abstract electrons from H(2)O, generating O(2) and a proton gradient subsequently used for ATP formation. The chain is Photosystem II CP43 reaction center protein from Lactuca sativa (Garden lettuce).